Reading from the N-terminus, the 103-residue chain is MTKTIKVKKSALIDIIKYPILTDKTTQMIEENKYSFAVEVKAKKPKIKEAIEQLFDVKVQQINTLIVKPQKKRVGKYIGYKSKYKKAVIKLYDPYKINLFADN.

This sequence belongs to the universal ribosomal protein uL23 family. Part of the 50S ribosomal subunit.

The protein localises to the plastid. It localises to the chloroplast. In terms of biological role, binds to 23S rRNA. This Gracilaria tenuistipitata var. liui (Red alga) protein is Large ribosomal subunit protein uL23c (rpl23).